The primary structure comprises 427 residues: MVKVLGLVAILLIVLAGNVLSYDRQGTRKNLVIHPTNEDDPTFPDQVHISLVGPDKMRISWITQSSISPSVVYGTVSGKYEGSANGTSSSYHYLLIYRSGQINDVVIGPLKPNTVYYYKCGGPSSTQEFSFRTPPSKFPIKFAVSGDLGTSEWSKSTLEHVSKWDYDVFILPGDLSYANMYQPLWDTFGRLVQPLASQRPWMVTHGNHELEKIPILHSNPFTAYNKRWRMPFEESGSSSNLYYSFNVYGVHIIMLGSYTDFEPGSEQYQWLENNLKKIDRKTTPWVVAVVHAPWYNSNEAHQGEKESVEMKESMETLLYKARVDLVFAGHVHAYERFSRVYQDKFDKCGPVYINIGDGGNLEGLATKYRDPNPEISLFREASFGHGQLVVENATHARWEWHRNDDDVSVEKDSVWLTSLLADSSCKI.

The N-terminal stretch at 1-21 (MVKVLGLVAILLIVLAGNVLS) is a signal peptide. N85 carries an N-linked (GlcNAc...) asparagine glycan. Fe cation is bound by residues D147, D174, and Y177. D174 is a Zn(2+) binding site. Zn(2+) contacts are provided by N207 and H291. N207 is a binding site for substrate. H301 (proton donor) is an active-site residue. H330 lines the Zn(2+) pocket. 330–332 (HVH) contributes to the substrate binding site. H332 is a Fe cation binding site. N392 carries N-linked (GlcNAc...) asparagine glycosylation.

This sequence belongs to the metallophosphoesterase superfamily. Purple acid phosphatase family. In terms of assembly, homodimer. The cofactor is Fe cation. It depends on Zn(2+) as a cofactor. Expressed flowers and siliques.

The protein resides in the secreted. The enzyme catalyses a phosphate monoester + H2O = an alcohol + phosphate. The chain is Probable purple acid phosphatase 20 (PAP20) from Arabidopsis thaliana (Mouse-ear cress).